Here is a 299-residue protein sequence, read N- to C-terminus: tRNA dimethylallyltransferase (299 aa).

Position 11–18 (11–18 (GPTAVGKT)) interacts with ATP. Residue 13-18 (TAVGKT) participates in substrate binding. Positions 36-39 (DSQQ) are interaction with substrate tRNA.

This sequence belongs to the IPP transferase family. Monomer. The cofactor is Mg(2+).

The enzyme catalyses adenosine(37) in tRNA + dimethylallyl diphosphate = N(6)-dimethylallyladenosine(37) in tRNA + diphosphate. Its function is as follows. Catalyzes the transfer of a dimethylallyl group onto the adenine at position 37 in tRNAs that read codons beginning with uridine, leading to the formation of N6-(dimethylallyl)adenosine (i(6)A). The polypeptide is tRNA dimethylallyltransferase (Streptococcus pyogenes serotype M18 (strain MGAS8232)).